Consider the following 431-residue polypeptide: ABSCISIC ACID-INSENSITIVE 5-like protein 7 (431 aa).

The tract at residues 1 to 29 (MGTHINFNNLGGGGHPGGEGSSNQMKPTG) is disordered. A compositionally biased stretch (gly residues) spans 10-20 (LGGGGHPGGEG). 2 positions are modified to phosphoserine: Ser39 and Ser61. Ser110 bears the Phosphoserine; by CPK32 mark. A disordered region spans residues 133–153 (DGNMEGSSGGGGESNVPPGRQ). Thr155 bears the Phosphothreonine mark. Residues 319-331 (SPGTSSAENNSLS) are compositionally biased toward polar residues. Residues 319–338 (SPGTSSAENNSLSPVPYVLN) are disordered. The Nuclear localization signal motif lies at 340–347 (GRRSNTGL). The bZIP domain maps to 351–414 (IERRQRRMIK…KNELKETSKR (64 aa)). Positions 353–372 (RRQRRMIKNRESAARSRARK) are basic motif. Residues 372 to 411 (KQAYTLELEAEIEKLKKTNQELQKKQAEMVEMQKNELKET) are a coiled coil. The segment at 379 to 393 (LEAEIEKLKKTNQEL) is leucine-zipper.

Belongs to the bZIP family. ABI5 subfamily. As to quaternary structure, DNA-binding heterodimer. Interacts with CPK32 and the AFP proteins AFP1, AFP2 and AFP3. Interacts with FREE1 (via C-terminus). Post-translationally, phosphorylated by CPK4 and CPK11 in vitro. As to expression, expressed in roots, leaves, flowers and immatures siliques.

The protein localises to the nucleus. In terms of biological role, functions as a transcriptional activator in the ABA-inducible expression of LTI65/RD29B (AC Q04980). Binds specifically to the ABA-responsive element (ABRE) of the LTI65/RD29B (AC Q04980) gene promoter. Binds to the promoter of FREE1 and activates its transcription. This chain is ABSCISIC ACID-INSENSITIVE 5-like protein 7, found in Arabidopsis thaliana (Mouse-ear cress).